A 681-amino-acid polypeptide reads, in one-letter code: Mating-type protein beta1-1 (681 aa).

The segment at residues Asp165–Glu227 is a DNA-binding region (homeobox; TALE-type). Residues Leu307–Ala318 are compositionally biased toward basic and acidic residues. Disordered regions lie at residues Leu307–Ser341, Ala353–Cys381, and Ser394–Phe466. Low complexity predominate over residues Thr413–Thr430.

Belongs to the TALE/M-ATYP homeobox family. As to quaternary structure, may dimerize.

Its subcellular location is the nucleus. Has a major regulatory role in sexual and asexual development. It may bind DNA itself or it may have a role in preventing DNA-binding of another protein. The sequence is that of Mating-type protein beta1-1 from Coprinopsis cinerea (Inky cap fungus).